The primary structure comprises 91 residues: Small ribosomal subunit protein uS17 (91 aa).

It belongs to the universal ribosomal protein uS17 family. Part of the 30S ribosomal subunit.

Its function is as follows. One of the primary rRNA binding proteins, it binds specifically to the 5'-end of 16S ribosomal RNA. The sequence is that of Small ribosomal subunit protein uS17 from Thermobifida fusca (strain YX).